Reading from the N-terminus, the 508-residue chain is Hydroxymethylglutaryl-CoA synthase, mitochondrial (508 aa).

Residues 1-37 (MQRLLTPVKRILQLTRAVQETSLTPARLLPVAHQRFS) constitute a mitochondrion transit peptide. The residue at position 52 (Lys52) is an N6-succinyllysine. 2 residues coordinate (3S)-3-hydroxy-3-methylglutaryl-CoA: Glu80 and Ala81. Lys83 carries the post-translational modification N6-acetyllysine; alternate. Lys83 is subject to N6-succinyllysine; alternate. The Proton donor/acceptor role is filled by Glu132. Positions 166, 204, and 208 each coordinate (3S)-3-hydroxy-3-methylglutaryl-CoA. The active-site Acyl-thioester intermediate is Cys166. The residue at position 221 (Lys221) is an N6-succinyllysine. Lys243 is modified (N6-acetyllysine). Residue Lys256 is modified to N6-acetyllysine; alternate. N6-succinyllysine; alternate is present on Lys256. (3S)-3-hydroxy-3-methylglutaryl-CoA is bound by residues Ser258 and His301. Residue His301 is the Proton donor/acceptor of the active site. Residue Lys306 is modified to N6-acetyllysine. Lys310 is a binding site for (3S)-3-hydroxy-3-methylglutaryl-CoA. Lys310 carries the N6-acetyllysine; alternate modification. At Lys310 the chain carries N6-succinyllysine; alternate. Lys333 carries the post-translational modification N6-succinyllysine. Residues Lys342, Lys350, Lys354, and Lys358 each carry the N6-acetyllysine; alternate modification. Residues Lys342, Lys350, Lys354, and Lys358 each carry the N6-succinyllysine; alternate modification. The (3S)-3-hydroxy-3-methylglutaryl-CoA site is built by Asn380 and Ser414. Phosphoserine is present on Ser433. N6-acetyllysine is present on Lys437. A Phosphoserine modification is found at Ser440. The residue at position 447 (Lys447) is an N6-acetyllysine; alternate. At Lys447 the chain carries N6-succinyllysine; alternate. Ser456 bears the Phosphoserine mark. Lys473 is subject to N6-acetyllysine; alternate. Lys473 carries the post-translational modification N6-succinyllysine; alternate. The residue at position 477 (Ser477) is a Phosphoserine.

This sequence belongs to the thiolase-like superfamily. HMG-CoA synthase family. In terms of assembly, homodimer. Post-translationally, succinylated. Desuccinylated by SIRT5. Succinylation, at least at Lys-83 and Lys-310, inhibits the enzymatic activity. As to expression, expression in liver is 200-fold higher than in any other tissue. Low expression in colon, kidney, testis, and pancreas. Very low expression in heart and skeletal muscle. Not detected in brain. Highest expression detected in heart and skeletal muscle.

Its subcellular location is the mitochondrion. The enzyme catalyses acetoacetyl-CoA + acetyl-CoA + H2O = (3S)-3-hydroxy-3-methylglutaryl-CoA + CoA + H(+). It participates in metabolic intermediate biosynthesis; (R)-mevalonate biosynthesis; (R)-mevalonate from acetyl-CoA: step 2/3. Its function is as follows. Catalyzes the first irreversible step in ketogenesis, condensing acetyl-CoA to acetoacetyl-CoA to form HMG-CoA, which is converted by HMG-CoA reductase (HMGCR) into mevalonate. The sequence is that of Hydroxymethylglutaryl-CoA synthase, mitochondrial (HMGCS2) from Homo sapiens (Human).